The sequence spans 349 residues: Hydroxymethylglutaryl-CoA synthase (349 aa).

The (3S)-3-hydroxy-3-methylglutaryl-CoA site is built by Asp30 and Ala31. The active-site Proton donor/acceptor is the Glu82. (3S)-3-hydroxy-3-methylglutaryl-CoA is bound by residues Cys114 and Thr155. Residue Cys114 is the Acyl-thioester intermediate of the active site. Arg203 contacts CoA. Residues Thr205 and His238 each contribute to the (3S)-3-hydroxy-3-methylglutaryl-CoA site. His238 (proton donor/acceptor) is an active-site residue. Residue Lys243 coordinates CoA. Residues Asn270 and Ser300 each coordinate (3S)-3-hydroxy-3-methylglutaryl-CoA.

The protein belongs to the thiolase-like superfamily. Archaeal HMG-CoA synthase family. As to quaternary structure, interacts with acetoacetyl-CoA thiolase that catalyzes the precedent step in the pathway and with a DUF35 protein. The acetoacetyl-CoA thiolase/HMG-CoA synthase complex channels the intermediate via a fused CoA-binding site, which allows for efficient coupling of the endergonic thiolase reaction with the exergonic HMGCS reaction.

The enzyme catalyses acetoacetyl-CoA + acetyl-CoA + H2O = (3S)-3-hydroxy-3-methylglutaryl-CoA + CoA + H(+). Its pathway is metabolic intermediate biosynthesis; (R)-mevalonate biosynthesis; (R)-mevalonate from acetyl-CoA: step 2/3. In terms of biological role, catalyzes the condensation of acetyl-CoA with acetoacetyl-CoA to form 3-hydroxy-3-methylglutaryl-CoA (HMG-CoA). Functions in the mevalonate (MVA) pathway leading to isopentenyl diphosphate (IPP), a key precursor for the biosynthesis of isoprenoid compounds that are building blocks of archaeal membrane lipids. The sequence is that of Hydroxymethylglutaryl-CoA synthase from Methanococcus vannielii (strain ATCC 35089 / DSM 1224 / JCM 13029 / OCM 148 / SB).